Consider the following 404-residue polypeptide: Magnesium transporter NIPA4 (404 aa).

Over 1-55 (MELRVSNTSCENGSLLHLYCSSQEVLCQIVNDLSPEVPSNATFHSWQERIRQNYG) the chain is Extracellular. Residues Asn7, Asn12, and Asn40 are each glycosylated (N-linked (GlcNAc...) asparagine). The helical transmembrane segment at 56–76 (FYIGLGLAFLSSFLIGSSVIL) threads the bilayer. The Cytoplasmic segment spans residues 77-102 (KKKGLLRLVATGATRAVDGGFGYLKD). The chain crosses the membrane as a helical span at residues 103–123 (AMWWAGFLTMAAGEVANFGAY). A topological domain (extracellular) is located at residue Ala124. Residues 125–145 (FAPATVVTPLGALSVLISAIL) traverse the membrane as a helical segment. Over 146–153 (SSYFLRES) the chain is Cytoplasmic. Residues 154–174 (LNLLGKLGCVICVAGSTVMVI) form a helical membrane-spanning segment. Over 175–195 (HAPEEEKVTTIMEMASKMKDT) the chain is Extracellular. Residues 196 to 216 (GFIVFAVLLLVSCLILIFVIA) form a helical membrane-spanning segment. Topologically, residues 217-223 (PRYGQRN) are cytoplasmic. The helical transmembrane segment at 224-244 (ILIYIIICSVIGAFSVAAVKG) threads the bilayer. The Extracellular segment spans residues 245-261 (LGITIKNFFQGLPVVRH). Residues 262–282 (PLPYILSLILALSLSTQVNFL) form a helical membrane-spanning segment. Residues 283-293 (NRALDIFNTSL) lie on the Cytoplasmic side of the membrane. A helical transmembrane segment spans residues 294–314 (VFPIYYVFFTTVVVTSSIILF). The Extracellular portion of the chain corresponds to 315–324 (KEWYSMSAVD). A helical membrane pass occupies residues 325 to 345 (IAGTLSGFVTIILGVFMLHAF). Topologically, residues 346–404 (KDLDISCASLPHMHKNPPPSPAPEPTVIRLEDKNVLVDNIELASTSSPEEKPKVFIIHS) are cytoplasmic.

The protein belongs to the NIPA family. Highly expressed in brain, lung, stomach, keratinocytes and leukocytes, and in all other tissues tested except liver, thyroid and fetal brain.

It is found in the cell membrane. It catalyses the reaction Mg(2+)(in) = Mg(2+)(out). Its function is as follows. Acts as a Mg(2+) transporter. Can also transport other divalent cations such as Ba(2+), Sr(2+) and Fe(2+) but to a much less extent than Mg(2+). May be a receptor for ligands (trioxilins A3 and B3) from the hepoxilin pathway. This chain is Magnesium transporter NIPA4 (NIPAL4), found in Homo sapiens (Human).